The chain runs to 198 residues: Ribonuclease HII (198 aa).

The 190-residue stretch at 2–191 (VLECGVDETG…IRELLVGKDN (190 aa)) folds into the RNase H type-2 domain. Residues aspartate 8, glutamate 9, and aspartate 100 each contribute to the a divalent metal cation site.

The protein belongs to the RNase HII family. Mn(2+) is required as a cofactor. Mg(2+) serves as cofactor.

It localises to the cytoplasm. The enzyme catalyses Endonucleolytic cleavage to 5'-phosphomonoester.. Endonuclease that specifically degrades the RNA of RNA-DNA hybrids. In Desulforamulus reducens (strain ATCC BAA-1160 / DSM 100696 / MI-1) (Desulfotomaculum reducens), this protein is Ribonuclease HII.